We begin with the raw amino-acid sequence, 515 residues long: Tyrosine decarboxylase 1 (515 aa).

2 tandem repeats follow at residues 81–138 (DDIT…TELE) and 141–192 (VTDW…GKDQ). Residues 81-192 (DDITNHIVPG…KVLNKIGKDQ (112 aa)) are 2 X approximate tandem repeats. Ala-105 is a binding site for substrate. Pyridoxal 5'-phosphate contacts are provided by Thr-169 and Cys-170. A substrate-binding site is contributed by His-205. Pyridoxal 5'-phosphate is bound by residues Thr-264 and Asn-318. Residue Lys-321 is modified to N6-(pyridoxal phosphate)lysine.

Belongs to the group II decarboxylase family. Requires pyridoxal 5'-phosphate as cofactor. In terms of tissue distribution, mostly expressed in bulbs, and, to a lower extent, in stems, roots, leaves and flowers.

The catalysed reaction is L-tyrosine + H(+) = tyramine + CO2. It functions in the pathway alkaloid biosynthesis. Catalyzes the decarboxylation of L-tyrosine to tyramine, which is converted to norbelladine, a precursor to all Amaryllidaceae alkaloids such as galanthamine, lycorine and haemanthamine, and including haemanthamine- and crinamine-type alkaloids, promising anticancer agents. This Narcissus pseudonarcissus (Daffodil) protein is Tyrosine decarboxylase 1.